A 181-amino-acid chain; its full sequence is UPF0340 protein OB2986 (181 aa).

Belongs to the UPF0340 family.

This Oceanobacillus iheyensis (strain DSM 14371 / CIP 107618 / JCM 11309 / KCTC 3954 / HTE831) protein is UPF0340 protein OB2986.